The primary structure comprises 224 residues: MMRVLVVEDNALLRHHLKVQLQDSGHQVDATEDAREADYYLNEHLPDIAIVDLGLPDEDGLSLIRRWRSSDISLPVLVLTAREGWQDKVEVLSSGADDYVTKPFHIEEVMARMQALMRRNSGLASQVINIPPFQVDLSRRELSVNEEVIKLTAFEYTIMETLIRNNGKVVSKDSLMLQLYPDAELRESHTIDVLMGRLRKKIQAQYPHDVITTVRGQGYLFELR.

The region spanning 3–117 (RVLVVEDNAL…EVMARMQALM (115 aa)) is the Response regulatory domain. A 4-aspartylphosphate modification is found at Asp-52. A DNA-binding region (ompR/PhoB-type) is located at residues 125–223 (SQVINIPPFQ…VRGQGYLFEL (99 aa)).

Post-translationally, phosphorylated by PhoQ.

The protein resides in the cytoplasm. Its function is as follows. Member of the two-component regulatory system PhoQ/PhoP which regulates the expression of genes involved in virulence and resistance to host defense antimicrobial peptides. This is Virulence transcriptional regulatory protein PhoP (phoP) from Salmonella choleraesuis (strain SC-B67).